Consider the following 328-residue polypeptide: DNA-directed RNA polymerase subunit alpha (328 aa).

The segment at 1 to 231 is alpha N-terminal domain (alpha-NTD); that stretch reads MIYQMQMPAK…EHVAFFADFS (231 aa). Residues 252–328 are alpha C-terminal domain (alpha-CTD); the sequence is MRKLLNTKIE…MDITKYQMKG (77 aa).

The protein belongs to the RNA polymerase alpha chain family. In terms of assembly, homodimer. The RNAP catalytic core consists of 2 alpha, 1 beta, 1 beta' and 1 omega subunit. When a sigma factor is associated with the core the holoenzyme is formed, which can initiate transcription.

The enzyme catalyses RNA(n) + a ribonucleoside 5'-triphosphate = RNA(n+1) + diphosphate. In terms of biological role, DNA-dependent RNA polymerase catalyzes the transcription of DNA into RNA using the four ribonucleoside triphosphates as substrates. This chain is DNA-directed RNA polymerase subunit alpha, found in Chlorobium phaeovibrioides (strain DSM 265 / 1930) (Prosthecochloris vibrioformis (strain DSM 265)).